Reading from the N-terminus, the 240-residue chain is Protein RoBo-1 (240 aa).

Positions 1 to 26 are cleaved as a signal peptide; sequence MSWFLVLKCLLTVCIISHLSVSSTES. A glycan (N-linked (GlcNAc...) asparagine) is linked at asparagine 42. 5 cysteine pairs are disulfide-bonded: cysteine 47-cysteine 76, cysteine 81-cysteine 102, cysteine 103-cysteine 108, cysteine 127-cysteine 151, and cysteine 144-cysteine 171. Asparagine 153 carries N-linked (GlcNAc...) asparagine glycosylation.

Belongs to the CNF-like-inhibitor family. N-glycosylated. In terms of tissue distribution, expressed abundantly in bone, including the lengthening growth plate where cartilage is remodeled into bone.

Its subcellular location is the secreted. In terms of biological role, may play a novel role in the growth or remodeling of bone. The protein is Protein RoBo-1 of Rattus norvegicus (Rat).